The chain runs to 226 residues: Endonuclease V (226 aa).

Residues D43 and D108 each contribute to the Mg(2+) site.

The protein belongs to the endonuclease V family. Requires Mg(2+) as cofactor.

It localises to the cytoplasm. It carries out the reaction Endonucleolytic cleavage at apurinic or apyrimidinic sites to products with a 5'-phosphate.. Functionally, DNA repair enzyme involved in the repair of deaminated bases. Selectively cleaves double-stranded DNA at the second phosphodiester bond 3' to a deoxyinosine leaving behind the intact lesion on the nicked DNA. The chain is Endonuclease V from Thermosipho melanesiensis (strain DSM 12029 / CIP 104789 / BI429).